The sequence spans 611 residues: Virulence metalloprotease (611 aa).

The signal sequence occupies residues M1–A25. Positions A26–H199 are excised as a propeptide. H346 contacts Zn(2+). E347 is an active-site residue. H350 and E370 together coordinate Zn(2+). H429 (proton donor) is an active-site residue.

It belongs to the peptidase M4 family. The cofactor is Ca(2+). Zn(2+) is required as a cofactor. Seems to be more extensively processed.

The protein resides in the secreted. In terms of biological role, extracellular zinc metalloprotease involved in the virulence mechanism of V.anguillarum. This Vibrio anguillarum (Listonella anguillarum) protein is Virulence metalloprotease (empA).